A 320-amino-acid polypeptide reads, in one-letter code: ATP-dependent 6-phosphofructokinase (320 aa).

G12 contributes to the ATP binding site. Residues 22 to 26 (RGVVR) and 55 to 60 (RYSVSD) contribute to the ADP site. ATP contacts are provided by residues 73-74 (RF) and 103-106 (GDGS). Residue D104 coordinates Mg(2+). Residue 126–128 (TID) coordinates substrate. The active-site Proton acceptor is D128. An ADP-binding site is contributed by R155. Residues R163 and 170–172 (MGR) contribute to the substrate site. Residues 186–188 (GCE), K212, and 214–216 (KKH) contribute to the ADP site. Substrate-binding positions include E223, R244, and 250-253 (HIQR).

Belongs to the phosphofructokinase type A (PFKA) family. ATP-dependent PFK group I subfamily. Prokaryotic clade 'B1' sub-subfamily. Homotetramer. The cofactor is Mg(2+).

Its subcellular location is the cytoplasm. It catalyses the reaction beta-D-fructose 6-phosphate + ATP = beta-D-fructose 1,6-bisphosphate + ADP + H(+). Its pathway is carbohydrate degradation; glycolysis; D-glyceraldehyde 3-phosphate and glycerone phosphate from D-glucose: step 3/4. With respect to regulation, allosterically activated by ADP and other diphosphonucleosides, and allosterically inhibited by phosphoenolpyruvate. In terms of biological role, catalyzes the phosphorylation of D-fructose 6-phosphate to fructose 1,6-bisphosphate by ATP, the first committing step of glycolysis. The protein is ATP-dependent 6-phosphofructokinase of Klebsiella pneumoniae (strain 342).